A 670-amino-acid polypeptide reads, in one-letter code: Lebercilin-like protein (670 aa).

Residues 30–51 (KRSPGTGDFSRNSNASNKSVDY) are disordered. Residues 38–51 (FSRNSNASNKSVDY) are compositionally biased toward polar residues. Coiled-coil stretches lie at residues 148-259 (LHKI…EREE) and 305-336 (AAQT…IKNI). Residues 374–393 (HQGTQKSDVPPLTTKGKKAT) form a disordered region. Residues 420-440 (EDSKRKYEDLSGEEKHLEVQI) are a coiled coil. Disordered regions lie at residues 495–516 (RSMQ…YTKG), 557–580 (KHLS…SFGK), and 609–670 (LKTD…KIII). Basic and acidic residues-rich tracts occupy residues 560-572 (SNRE…HSDS) and 621-632 (GSEEPLQSKESH). The span at 651–662 (TVVNSIKPSSPT) shows a compositional bias: polar residues.

This sequence belongs to the LCA5 family.

The protein is Lebercilin-like protein (LCA5L) of Homo sapiens (Human).